The primary structure comprises 3130 residues: MFSVRIVTADYYMASPLQGLDTCQSPLTQAPVKKVPVVRVFGATPAGQKTCLHLHGIFPYLYVPYDGYGQQPESYLSQMAFSIDRALNVALGNPSSTAQHVFKVSLVSGMPFYGYHEKERHFMKIYLYNPTMVKRICELLQSGAIMNKFYQPHEAHIPYLLQLFIDYNLYGMNLINLAAVKFRKARRKSNTLHATGSCKNHLSGNSLADTLFRWEQDEIPSSLILEGVEPQSTCELEVDAVAADILNRLDIEAQIGGNPGLQAIWEDEKQRRRNRNETSQMSQPESQDHRFVPATESEKKFQKRLQEILKQNDFSVTLSGSVDYSDGSQEFSAELTLHSEVLSPEMLQCTPANMVEVHKDKESSKGHTRHKVEEALINEEAILNLMENSQTFQPLTQRLSESPVFMDSSPDEALVHLLAGLESDGYRGERNRMPSPCRSFGNNKYPQNSDDEENEPQIEKEEMELSLVMSQRWDSNIEEHCAKKRSLCRNTHRSSTEDDDSSSGEEMEWSDNSLLLASLSIPQLDGTADENSDNPLNNENSRTHSSVIATSKLSVKPSIFHKDAATLEPSSSAKITFQCKHTSALSSHVLNKEDLIEDLSQTNKNTEKGLDNSVTSFTNESTYSMKYPGSLSSTVHSENSHKENSKKEILPVSSCESSIFDYEEDIPSVTRQVPSRKYTNIRKIEKDSPFIHMHRHPNENTLGKNSFNFSDLNHSKNKVSSEGNEKGNSTALSSLFPSSFTENCELLSCSGENRTMVHSLNSTADESGLNKLKIRYEEFQEHKTEKPSLSQQAAHYMFFPSVVLSNCLTRPQKLSPVTYKLQPGNKPSRLKLNKRKLAGHQETSTKSSETGSTKDNFIQNNPCNSNPEKDNALASDLTKTTRGAFENKTPTDGFIDCHFGDGTLETEQSFGLYGNKYTLRAKRKVNYETEDSESSFVTHNSKISLPHPMEIGESLDGTLKSRKRRKMSKKLPPVIIKYIIINRFRGRKNMLVKLGKIDSKEKQVILTEEKMELYKKLAPLKDFWPKVPDSPATKYPIYPLTPKKSHRRKSKHKSAKKKTGKQQRTNNENIKRTLSFRKKRSHAILSPPSPSYNAETEDCDLNYSDVMSKLGFLSERSTSPINSSPPRCWSPTDPRAEEIMAAAEKEAMLFKGPNVYKKTVNSRIGKTSRARAQIKKSKAKLANPSIVTKKRNKRNQTNKLVDDGKKKPRAKQKTNEKGTSRKHTTLKDEKIKSQSGAEVKFVLKHQNVSEFASSSGGSQLLFKQKDMPLMGSAVDHPLSASLPTGINAQQKLSGCFSSFLESKKSVDLQTFPSSRDDLHPSVVCNSIGPGVSKINVQRPHNQSAMFTLKESTLIQKNIFDLSNHLSQVAQNTQISSGMSSKIEDNANNIQRNYLSSIGKLSEYRNSLESKLDQAYTPNFLHCKDSQQQIVCIAEQSKHSETCSPGNTASEESQMPNNCFVTSLRSPIKQIAWEQKQRGFILDMSNFKPERVKPRSLSEAISQTKALSQCKNRNVSTPSAFGEGQSGLAVLKELLQKRQQKAQNANTTQDPLSNKHQPNKNISGSLEHNKANKRTRSVTSPRKPRTPRSTKQKEKIPKLLKVDSLNLQNSSQLDNSVSDDSPIFFSDPGFESCYSLEDSLSPEHNYNFDINTIGQTGFCSFYSGSQFVPADQNLPQKFLSDAVQDLFPGQAIEKNEFLSHDNQKCDEDKHHTTDSASWIRSGTLSPEIFEKSTIDSNENRRHNQWKNSFHPLTTRSNSIMDSFCVQQAEDCLSEKSRLNRSSVSKEVFLSLPQPNNSDWIQGHTRKEMGQSLDSANTSFTAILSSPDGELVDVACEDLELYVSRNNDMLTPTPDSSPRSTSSPSQSKNGSFTPRTANILKPLMSPPSREEIMATLLDHDLSETIYQEPFCSNPSDVPEKPREIGGRLLMVETRLANDLAEFEGDFSLEGLRLWKTAFSAMTQNPRPGSPLRSGQGVVNKGSSNSPKMVEDKKIVIMPCKCAPSRQLVQVWLQAKEEYERSKKLPKTKPTGVVKSAENFSSSVNPDDKPVVPPKMDVSPCILPTTAHTKEDVDNSQIALQAPTTGCSQTASESQMLPPVASASDPEKDEDDDDNYYISYSSPDSPVIPPWQQPISPDSKALNGDDRPSSPVEELPSLAFENFLKPIKDGIQKSPCSEPQEPLVISPINTRARTGKCESLCFHSTPIIQRKLLERLPEAPGLSPLSTEPKTQKLSNKKGSNTDTLRRVLLTQAKNQFAAVNTPQKETSQIDGPSLNNTYGFKVSIQNLQEAKALHEIQNLTLISVELHARTRRDLEPDPEFDPICALFYCISSDTPLPDTEKTELTGVIVIDKDKTVFSQDIRYQTPLLIRSGITGLEVTYAADEKALFHEIANIIKRYDPDILLGYEIQMHSWGYLLQRAAALSIDLCRMISRVPDDKIENRFAAERDEYGSYTMSEINIVGRITLNLWRIMRNEVALTNYTFENVSFHVLHQRFPLFTFRVLSDWFDNKTDLYRWKMVDHYVSRVRGNLQMLEQLDLIGKTSEMARLFGIQFLHVLTRGSQYRVESMMLRIAKPMNYIPVTPSVQQRSQMRAPQCVPLIMEPESRFYSNSVLVLDFQSLYPSIVIAYNYCFSTCLGHVENLGKYDEFKFGCTSLRVPPDLLYQVRHDITVSPNGVAFVKPSVRKGVLPRMLEEILKTRFMVKQSMKAYKQDRALSRMLDARQLGLKLIANVTFGYTSANFSGRMPCIEVGDSIVHKARETLERAIKLVNDTKKWGARVVYGDTDSMFVLLKGATKEQSFKIGQEIAEAVTATNPKPVKLKFEKVYLPCVLQTKKRYVGYMYETLDQKDPVFDAKGIETVRRDSCPAVSKILERSLKLLFETRDISLIKQYVQRQCMKLLEGKASIQDFIFAKEYRGSFSYKPGACVPALELTRKMLTYDRRSEPQVGERVPYVIIYGTPGVPLIQLVRRPVEVLQDPTLRLNATYYITKQILPPLARIFSLIGIDVFSWYHELPRIHKATSSSRSEPEGRKGTISQYFTTLHCPVCDDLTQHGICSKCRSQPQHVAVILNQEIRELERQQEQLVKICKNCTGCFDRHIPCVSLNCPVLFKLSRVNRELSKAPYLRQLLDQF.

Disordered stretches follow at residues 263–295 (AIWEDEKQRRRNRNETSQMSQPESQDHRFVPAT), 425–457 (GYRGERNRMPSPCRSFGNNKYPQNSDDEENEPQ), 487–510 (LCRNTHRSSTEDDDSSSGEEMEWS), 524–548 (LDGTADENSDNPLNNENSRTHSSVI), 697–728 (PNENTLGKNSFNFSDLNHSKNKVSSEGNEKGN), and 817–871 (VTYK…EKDN). Residues 286-295 (SQDHRFVPAT) show a composition bias toward basic and acidic residues. Positions 497-509 (EDDDSSSGEEMEW) are enriched in acidic residues. Composition is skewed to polar residues over residues 533–548 (DNPLNNENSRTHSSVI) and 699–728 (ENTLGKNSFNFSDLNHSKNKVSSEGNEKGN). Basic residues predominate over residues 828–838 (SRLKLNKRKLA). The span at 842–854 (ETSTKSSETGSTK) shows a compositional bias: low complexity. The segment covering 855–866 (DNFIQNNPCNSN) has biased composition (polar residues). A Phosphoserine modification is found at S1030. Disordered stretches follow at residues 1035–1095 (YPIY…YNAE), 1162–1231 (SRIG…DEKI), and 1537–1600 (RQQK…KLLK). T1041 bears the Phosphothreonine mark. Basic residues-rich tracts occupy residues 1043–1061 (KKSHRRKSKHKSAKKKTGK) and 1166–1179 (KTSRARAQIKKSKA). Basic and acidic residues predominate over residues 1213-1231 (KTNEKGTSRKHTTLKDEKI). A compositionally biased stretch (polar residues) spans 1540-1565 (KAQNANTTQDPLSNKHQPNKNISGSL). The segment covering 1570-1589 (ANKRTRSVTSPRKPRTPRST) has biased composition (basic residues). Over residues 1590-1600 (KQKEKIPKLLK) the composition is skewed to basic and acidic residues. S1724 is subject to Phosphoserine. Disordered stretches follow at residues 1845 to 1882 (NDMLTPTPDSSPRSTSSPSQSKNGSFTPRTANILKPLM), 1962 to 1984 (NPRPGSPLRSGQGVVNKGSSNSP), 2017 to 2050 (ERSKKLPKTKPTGVVKSAENFSSSVNPDDKPVVP), 2080 to 2150 (PTTG…SPVE), and 2216 to 2236 (APGLSPLSTEPKTQKLSNKKG). The mediates interaction with MAD2L2 stretch occupies residues 1847–1898 (MLTPTPDSSPRSTSSPSQSKNGSFTPRTANILKPLMSPPSREEIMATLLDHD). Residues 1849–1865 (TPTPDSSPRSTSSPSQS) are compositionally biased toward low complexity. S1967 carries the post-translational modification Phosphoserine. Residues 2080 to 2092 (PTTGCSQTASESQ) are compositionally biased toward polar residues. A compositionally biased stretch (low complexity) spans 2113–2122 (YYISYSSPDS). The segment covering 2221 to 2236 (PLSTEPKTQKLSNKKG) has biased composition (polar residues). Residues C3042, C3045, C3054, and C3057 each coordinate Zn(2+). A CysA-type zinc finger spans residues 3042–3057 (CPVCDDLTQHGICSKC). The [4Fe-4S] cluster site is built by C3086, C3089, C3099, and C3104. Residues 3086–3104 (CKNCTGCFDRHIPCVSLNC) carry the CysB motif motif.

Belongs to the DNA polymerase type-B family. Heterodimer with MAD2L2. This dimer forms the minimal DNA polymerase zeta complex (Pol-zeta2), with REV3L bearing DNA polymerase catalytic activity, although its activity is very low in this context. Component of the tetrameric Pol-zeta complex (Pol-zeta4), which consists of REV3L, MAD2L2, POLD2 and POLD3; Pol-zeta4 is the fully active form of DNA polymerase zeta. Requires [4Fe-4S] cluster as cofactor. Ubiquitously expressed.

The protein resides in the nucleus. The enzyme catalyses DNA(n) + a 2'-deoxyribonucleoside 5'-triphosphate = DNA(n+1) + diphosphate. Its function is as follows. Catalytic subunit of the DNA polymerase zeta complex, an error-prone polymerase specialized in translesion DNA synthesis (TLS). Lacks an intrinsic 3'-5' exonuclease activity and thus has no proofreading function. This is DNA polymerase zeta catalytic subunit (REV3L) from Homo sapiens (Human).